Reading from the N-terminus, the 139-residue chain is GSK3B-interacting protein (139 aa).

The disordered stretch occupies residues 1–22 (METDCNPMELSSMSGFEEGSEL). The tract at residues 41–45 (VNDVL) is required for PRKAR2A interaction; contributes to a protective effect against H(2)O(2)-induced apoptosis. Positions 115 to 139 (SPAYREAFGNALLQRLEALKRDGQS) are interaction with GSK3B and acts as a GSK3B inhibitor.

It belongs to the GSKIP family. As to quaternary structure, forms a complex composed of PRKAR2A or PRKAR2B, GSK3B and GSKIP through GSKIP interaction; facilitates PKA-induced phosphorylation of GSK3B leading to GSK3B inactivation; recruits DNM1L through GSK3B for PKA-mediated phosphorylation of DNM1L; promotes beta-catenin degradation through GSK3B-induced phosphorylation of beta-catenin; stabilizes beta-catenin and enhances Wnt-induced signaling through PKA-induced phosphorylation of beta-catenin. Interacts with GSK3B; induces GSK3B-mediated phosphorylation of GSKIP and inhibits GSK3B kinase activity. In terms of processing, phosphorylated by GSK3B. As to expression, detected in heart, brain, placenta, liver, skeletal muscle, kidney, testis, lung and pancreas.

The protein localises to the cytoplasm. It is found in the nucleus. Functionally, A-kinase anchoring protein for GSK3B and PKA that regulates or facilitates their kinase activity towards their targets. The ternary complex enhances Wnt-induced signaling by facilitating the GSK3B- and PKA-induced phosphorylation of beta-catenin leading to beta-catenin degradation and stabilization respectively. Upon cAMP activation, the ternary complex contributes to neuroprotection against oxidative stress-induced apoptosis by facilitating the PKA-induced phosphorylation of DML1 and PKA-induced inactivation of GSK3B. During neurite outgrowth promotes neuron proliferation; while increases beta-catenin-induced transcriptional activity through GSK3B kinase activity inhibition, reduces N-cadherin level to promote cell cycle progression. The sequence is that of GSK3B-interacting protein from Homo sapiens (Human).